A 94-amino-acid polypeptide reads, in one-letter code: Ubiquitin-like protein ATG12B (94 aa).

Alanine 2 is modified (N-acetylalanine). A Glycyl lysine isopeptide (Gly-Lys) (interchain with K-128 in ATG5) cross-link involves residue glycine 94.

This sequence belongs to the ATG12 family. In terms of tissue distribution, ubiquitous.

It localises to the cytoplasm. Its function is as follows. Ubiquitin-like protein involved in cytoplasm to vacuole transport (Cvt) and autophagy vesicles formation. Conjugation with ATG5 through a ubiquitin-like conjugating system involving also ATG7 as an E1-like activating enzyme and ATG10 as an E2-like conjugating enzyme, is essential for its function. ATG12/ATG5 conjugate has an essential role in plant nutrient recycling. This chain is Ubiquitin-like protein ATG12B (ATG12B), found in Arabidopsis thaliana (Mouse-ear cress).